A 425-amino-acid chain; its full sequence is MAFLALGINHKTASVDVRERVAFTPEQLVDALQQLCRLTSSREAAILSTCNRSELYIEQDHLSADAVLQWLADYHRLSLDELRASAYVHEEHDAVKHMMRVASGLDSLVLGEPQILGQMKSAYAVAREAGTVGPLLGRLFQATFSAAKQVRTDTAIGENPVSVAFAAVSLAKQIFADLGRSQALLIGAGETITLVARHLHEQGVRRIVVANRTLERASILAEQFGAHAVLLADIPQELANSDIVISSTASQLPILGKGAVESALKQRRHKPIFMVDIAVPRDIETEVGELDDVYLYTVDDLHDVVAENLKSRQGAAQAAEELVTVGAEDFMLRLRELAAVDVLKAYRQQSERLRDEELQKAQRLLANGGNPEDVLAQLARGLTNKLLHAPSVQLKKLSAEGRVDALAMAQELFALNEGSTDKSPQ.

Substrate contacts are provided by residues 49–52 (TCNR), S107, 112–114 (EPQ), and Q118. Residue C50 is the Nucleophile of the active site. 187–192 (GAGETI) contributes to the NADP(+) binding site.

The protein belongs to the glutamyl-tRNA reductase family. As to quaternary structure, homodimer.

The catalysed reaction is (S)-4-amino-5-oxopentanoate + tRNA(Glu) + NADP(+) = L-glutamyl-tRNA(Glu) + NADPH + H(+). It participates in porphyrin-containing compound metabolism; protoporphyrin-IX biosynthesis; 5-aminolevulinate from L-glutamyl-tRNA(Glu): step 1/2. Its function is as follows. Catalyzes the NADPH-dependent reduction of glutamyl-tRNA(Glu) to glutamate 1-semialdehyde (GSA). The polypeptide is Glutamyl-tRNA reductase (Pseudomonas putida (strain GB-1)).